Here is a 473-residue protein sequence, read N- to C-terminus: Adenosylhomocysteinase (473 aa).

Positions 64, 139, and 199 each coordinate substrate. Thr200 to Thr202 lines the NAD(+) pocket. Substrate is bound by residues Lys229 and Asp233. Residues Asn234, Gly263–Gly268, Glu286, Asn321, Ile342–His344, and Asn387 each bind NAD(+).

It belongs to the adenosylhomocysteinase family. It depends on NAD(+) as a cofactor.

Its subcellular location is the cytoplasm. It catalyses the reaction S-adenosyl-L-homocysteine + H2O = L-homocysteine + adenosine. It functions in the pathway amino-acid biosynthesis; L-homocysteine biosynthesis; L-homocysteine from S-adenosyl-L-homocysteine: step 1/1. Functionally, may play a key role in the regulation of the intracellular concentration of adenosylhomocysteine. In Paraburkholderia phymatum (strain DSM 17167 / CIP 108236 / LMG 21445 / STM815) (Burkholderia phymatum), this protein is Adenosylhomocysteinase.